The following is a 406-amino-acid chain: Putative 12-oxophytodienoate reductase 12 (406 aa).

Residues proline 41–threonine 43, alanine 74, and glutamine 119 contribute to the FMN site. Histidine 188–asparagine 191 contributes to the substrate binding site. FMN contacts are provided by residues arginine 240, glycine 317, and glycine 338 to arginine 339.

The protein belongs to the NADH:flavin oxidoreductase/NADH oxidase family. It depends on FMN as a cofactor.

Putative oxophytodienoate reductase that may be involved in the biosynthesis or metabolism of oxylipin signaling molecules. This is Putative 12-oxophytodienoate reductase 12 (OPR12) from Oryza sativa subsp. japonica (Rice).